A 91-amino-acid polypeptide reads, in one-letter code: Small ribosomal subunit protein uS15 (91 aa).

Belongs to the universal ribosomal protein uS15 family. In terms of assembly, part of the 30S ribosomal subunit. Forms a bridge to the 50S subunit in the 70S ribosome, contacting the 23S rRNA.

One of the primary rRNA binding proteins, it binds directly to 16S rRNA where it helps nucleate assembly of the platform of the 30S subunit by binding and bridging several RNA helices of the 16S rRNA. Functionally, forms an intersubunit bridge (bridge B4) with the 23S rRNA of the 50S subunit in the ribosome. In Sulfurimonas denitrificans (strain ATCC 33889 / DSM 1251) (Thiomicrospira denitrificans (strain ATCC 33889 / DSM 1251)), this protein is Small ribosomal subunit protein uS15.